A 377-amino-acid polypeptide reads, in one-letter code: MSPSNQSAEGLPQEAANRSLNATGTPEAWDPGTLQALKISLAVVLSIITVATVLSNTFVLTTILLTRKLHTPANYLIGSLATTDLLVSILVMPISIAYTITHTWNFGQVLCDIWVSSDITCCTASILHLCVIALDRYWAITDALEYSKRRTAGHAAAMIAVVWAISICISIPPLFWRQAKAHEEVSDCLVNTSQISYTIYSTCGAFYIPSVLLIVLYGRIYMAARNRILNPPSLYGKRFTTAHLITGSAGSSLCSLSPSLGEGHSHSAGSPLFFNPVRIKLADSVLERKRISAARERKATKTLGIILGAFIGCWLPFFVASLVLPICRDSCWMPPGLFDFFTWLGYLNSLINPIIYTVFNEDFRQAFQRVIHFRKAF.

N-linked (GlcNAc...) asparagine glycosylation is found at Asn-5, Asn-17, and Asn-21. 3 helical membrane-spanning segments follow: residues 39-64 (ISLA…TTIL), 76-97 (LIGS…ISIA), and 110-134 (LCDI…VIAL). The cysteines at positions 111 and 188 are disulfide-linked. Serotonin is bound by residues Asp-118 and Cys-122. A DRY motif; important for ligand-induced conformation changes motif is present at residues 135–137 (DRY). A run of 4 helical transmembrane segments spans residues 155–176 (AAAM…PLFW), 195–218 (ISYT…VLYG), 301–326 (KTLG…VLPI), and 336–359 (GLFD…YTVF). Ser-321 is a binding site for serotonin. Positions 352 to 356 (NPIIY) match the NPxxY motif; important for ligand-induced conformation changes and signaling motif.

It belongs to the G-protein coupled receptor 1 family. In terms of assembly, homodimer. Heterodimer with HTR1B.

It is found in the cell membrane. G-protein coupled receptor for 5-hydroxytryptamine (serotonin). Also functions as a receptor for ergot alkaloid derivatives, various anxiolytic and antidepressant drugs and other psychoactive substances. Ligand binding causes a conformation change that triggers signaling via guanine nucleotide-binding proteins (G proteins) and modulates the activity of downstream effectors, such as adenylate cyclase. HTR1D is coupled to G(i)/G(o) G alpha proteins and mediates inhibitory neurotransmission by inhibiting adenylate cyclase activity. Regulates the release of 5-hydroxytryptamine in the brain, and thereby affects neural activity. May also play a role in regulating the release of other neurotransmitters. May play a role in vasoconstriction. The chain is 5-hydroxytryptamine receptor 1D (HTR1D) from Oryctolagus cuniculus (Rabbit).